The primary structure comprises 261 residues: Gap junction beta-6 protein (261 aa).

Residues 1 to 22 (MDWGTLHTFVGGVNKHSTSIGK) lie on the Cytoplasmic side of the membrane. A helical membrane pass occupies residues 23–45 (VWVTVLFVFRVMILVVAAQEVWG). At 46-75 (DEQEDFVCNTLQPGCRNVCYDHFFPVSHIR) the chain is on the extracellular side. A helical membrane pass occupies residues 76–98 (LWALQLIFVSTPALLVAMHVAYY). The Cytoplasmic segment spans residues 99-131 (RHEAARRFRRGETRSEFKDLEDIKRQKVRIEGS). Residues 132–154 (LWWTYTSSIFFRIVFEAAFMYVF) traverse the membrane as a helical segment. Residues 155-192 (YFLYNGYHLPWVLKCGIQPCPNLVDCFISRPTEKTVFT) are Extracellular-facing. The helical transmembrane segment at 193–215 (IFMISASVICMLLNVAELCYLLL) threads the bilayer. Topologically, residues 216 to 261 (KVCFRRSKRAQTQKAPPNHALKESKQNEMNELISEGGQNAITGFPS) are cytoplasmic.

This sequence belongs to the connexin family. Beta-type (group I) subfamily. In terms of assembly, a connexon is composed of a hexamer of connexins. Interacts with CNST.

The protein localises to the cell membrane. The protein resides in the cell junction. It localises to the gap junction. In terms of biological role, one gap junction consists of a cluster of closely packed pairs of transmembrane channels, the connexons, through which materials of low MW diffuse from one cell to a neighboring cell. The chain is Gap junction beta-6 protein (GJB6) from Bos taurus (Bovine).